We begin with the raw amino-acid sequence, 94 residues long: Protein RnfH (94 aa).

The protein belongs to the UPF0125 (RnfH) family.

This Yersinia pestis bv. Antiqua (strain Antiqua) protein is Protein RnfH.